A 428-amino-acid chain; its full sequence is Glutamyl-tRNA reductase (428 aa).

Residues 50-53 (TCNR), S110, 115-117 (ETQ), and Q121 contribute to the substrate site. The active-site Nucleophile is the C51. 190-195 (GAGEMG) lines the NADP(+) pocket.

This sequence belongs to the glutamyl-tRNA reductase family. Homodimer.

It carries out the reaction (S)-4-amino-5-oxopentanoate + tRNA(Glu) + NADP(+) = L-glutamyl-tRNA(Glu) + NADPH + H(+). It functions in the pathway porphyrin-containing compound metabolism; protoporphyrin-IX biosynthesis; 5-aminolevulinate from L-glutamyl-tRNA(Glu): step 1/2. Its function is as follows. Catalyzes the NADPH-dependent reduction of glutamyl-tRNA(Glu) to glutamate 1-semialdehyde (GSA). The protein is Glutamyl-tRNA reductase of Campylobacter curvus (strain 525.92).